A 316-amino-acid polypeptide reads, in one-letter code: uncharacterized protein (316 aa).

The segment at 1–34 (MATKRKIGDGYSSSDDNQPKRERSEGGEDQQLVP) is disordered. Over residues 17 to 26 (NQPKRERSEG) the composition is skewed to basic and acidic residues.

This is an uncharacterized protein from Lepidoptera (butterflies and moths).